The primary structure comprises 179 residues: Large ribosomal subunit protein uL6 (179 aa).

Belongs to the universal ribosomal protein uL6 family. In terms of assembly, part of the 50S ribosomal subunit.

Functionally, this protein binds to the 23S rRNA, and is important in its secondary structure. It is located near the subunit interface in the base of the L7/L12 stalk, and near the tRNA binding site of the peptidyltransferase center. This Mycobacterium sp. (strain KMS) protein is Large ribosomal subunit protein uL6.